A 72-amino-acid chain; its full sequence is Phaiodotoxin-2 (72 aa).

The region spanning 1–72 (KFIRHKDESF…CFGALESKCA (72 aa)) is the LCN-type CS-alpha/beta domain. Intrachain disulfides connect Cys-13–Cys-38, Cys-23–Cys-50, Cys-27–Cys-52, and Cys-63–Cys-71.

Belongs to the long (4 C-C) scorpion toxin superfamily. Sodium channel inhibitor family. As to expression, expressed by the venom gland.

The protein localises to the secreted. In terms of biological role, sodium channel (Nav) specific neurotoxin. This chain is Phaiodotoxin-2, found in Anuroctonus phaiodactylus (Mafia scorpion).